We begin with the raw amino-acid sequence, 74 residues long: Translation initiation factor IF-1 (74 aa).

The 72-residue stretch at 1 to 72 (MSKEDAIEME…NKGRITYRLK (72 aa)) folds into the S1-like domain.

This sequence belongs to the IF-1 family. As to quaternary structure, component of the 30S ribosomal translation pre-initiation complex which assembles on the 30S ribosome in the order IF-2 and IF-3, IF-1 and N-formylmethionyl-tRNA(fMet); mRNA recruitment can occur at any time during PIC assembly.

The protein resides in the cytoplasm. In terms of biological role, one of the essential components for the initiation of protein synthesis. Stabilizes the binding of IF-2 and IF-3 on the 30S subunit to which N-formylmethionyl-tRNA(fMet) subsequently binds. Helps modulate mRNA selection, yielding the 30S pre-initiation complex (PIC). Upon addition of the 50S ribosomal subunit IF-1, IF-2 and IF-3 are released leaving the mature 70S translation initiation complex. This chain is Translation initiation factor IF-1, found in Synechococcus sp. (strain JA-2-3B'a(2-13)) (Cyanobacteria bacterium Yellowstone B-Prime).